A 109-amino-acid polypeptide reads, in one-letter code: MEMPNLGDMMKQIQQAGAKMQDVQKQLEKTVTHGEAGGGMVKVSVNGRQRLLSLAIDPDIMDDREMVQDLVLAAVNSAIEESGRVSQEEIAKVAGGMINPADILKNMGK.

It belongs to the YbaB/EbfC family. Homodimer.

It is found in the cytoplasm. Its subcellular location is the nucleoid. Binds to DNA and alters its conformation. May be involved in regulation of gene expression, nucleoid organization and DNA protection. The chain is Nucleoid-associated protein Cvib_1034 from Chlorobium phaeovibrioides (strain DSM 265 / 1930) (Prosthecochloris vibrioformis (strain DSM 265)).